We begin with the raw amino-acid sequence, 175 residues long: MSRTRQIPSEPASSSQLELTEEHTETSSAVPVPATLRLRGADEPAANRLELNEGNSRRIRWSEDVIDNEGMGKKSSKVCCIYHKSRPIGDSSSESESSDSSTSNSDTDSDDEAACHRRTGHRPPTAQGENYASSGQRLSSNSEERTCRSSHRARKTKRKPSPNAYEKMPKTTKGR.

The disordered stretch occupies residues M1–R175. Residues D90–D106 are compositionally biased toward low complexity. Over residues Q127 to N141 the composition is skewed to polar residues. A compositionally biased stretch (basic residues) spans R148–P160.

This sequence belongs to the YPI1 family.

It localises to the nucleus. Regulator of type 1 phosphatases which maintains protein phosphatase activity under strict control. The chain is Type 1 phosphatases regulator ypi1 (ypi1) from Aspergillus niger (strain ATCC MYA-4892 / CBS 513.88 / FGSC A1513).